A 913-amino-acid polypeptide reads, in one-letter code: DNA mismatch repair protein MutS (913 aa).

720 to 727 (GPNASGKS) is an ATP binding site.

This sequence belongs to the DNA mismatch repair MutS family.

In terms of biological role, this protein is involved in the repair of mismatches in DNA. It is possible that it carries out the mismatch recognition step. This protein has a weak ATPase activity. This chain is DNA mismatch repair protein MutS, found in Prochlorococcus marinus (strain AS9601).